The following is a 218-amino-acid chain: Ribose-5-phosphate isomerase A (218 aa).

Residues 28-31 (SGST), 81-84 (DGAD), and 94-97 (KGGG) contribute to the substrate site. The active-site Proton acceptor is the Glu103. Position 121 (Lys121) interacts with substrate.

The protein belongs to the ribose 5-phosphate isomerase family. As to quaternary structure, homodimer.

It catalyses the reaction aldehydo-D-ribose 5-phosphate = D-ribulose 5-phosphate. The protein operates within carbohydrate degradation; pentose phosphate pathway; D-ribose 5-phosphate from D-ribulose 5-phosphate (non-oxidative stage): step 1/1. Its function is as follows. Catalyzes the reversible conversion of ribose-5-phosphate to ribulose 5-phosphate. This is Ribose-5-phosphate isomerase A from Dichelobacter nodosus (strain VCS1703A).